A 130-amino-acid chain; its full sequence is Small ribosomal subunit protein uS9 (130 aa).

Over residues 99 to 110 (KKAGFLTRDPRM) the composition is skewed to basic and acidic residues. Positions 99-130 (KKAGFLTRDPRMKERKKYGLKKARRAPQFSKR) are disordered. The segment covering 111-130 (KERKKYGLKKARRAPQFSKR) has biased composition (basic residues).

Belongs to the universal ribosomal protein uS9 family.

The polypeptide is Small ribosomal subunit protein uS9 (Clostridium botulinum (strain Eklund 17B / Type B)).